The primary structure comprises 75 residues: Beta-defensin 30 (75 aa).

The first 22 residues, 1–22, serve as a signal peptide directing secretion; the sequence is MGSLQLILVLFVLLSDVPPVRS. Disulfide bonds link C35/C62, C42/C56, and C46/C63.

It belongs to the beta-defensin family.

It localises to the secreted. In terms of biological role, has antibacterial activity. The chain is Beta-defensin 30 (Defb30) from Rattus norvegicus (Rat).